The sequence spans 286 residues: 5-amino-6-(5-phospho-D-ribitylamino)uracil phosphatase YwtE (286 aa).

D7 serves as the catalytic Nucleophile. D7 lines the Mg(2+) pocket. L8 serves as a coordination point for phosphate. Residue D9 participates in Mg(2+) binding. Phosphate is bound by residues T41 to G42 and K210. The Mg(2+) site is built by D233 and S234. N236 serves as a coordination point for phosphate.

It belongs to the HAD-like hydrolase superfamily. Cof family. Requires Mg(2+) as cofactor.

The catalysed reaction is 5-amino-6-(5-phospho-D-ribitylamino)uracil + H2O = 5-amino-6-(D-ribitylamino)uracil + phosphate. It functions in the pathway cofactor biosynthesis; riboflavin biosynthesis; 5-amino-6-(D-ribitylamino)uracil from GTP: step 4/4. Catalyzes the dephosphorylation of the riboflavin precursor 5-amino-6-(5-phospho-D-ribitylamino)uracil and of flavin mononucleotide (FMN) in vitro. Also catalyzes the dephosphorylation of phosphorylated 5-6 carbon sugars and monophosphate nucleotides (NMP) in vitro. The protein is 5-amino-6-(5-phospho-D-ribitylamino)uracil phosphatase YwtE (ywtE) of Bacillus subtilis (strain 168).